Consider the following 487-residue polypeptide: 3-octaprenyl-4-hydroxybenzoate carboxy-lyase (487 aa).

N172 serves as a coordination point for Mn(2+). Prenylated FMN-binding positions include I175–R177, R189–L191, and R194–G195. E238 provides a ligand contact to Mn(2+). D287 (proton donor) is an active-site residue.

The protein belongs to the UbiD family. In terms of assembly, homohexamer. Requires prenylated FMN as cofactor. Mn(2+) serves as cofactor.

Its subcellular location is the cell membrane. It carries out the reaction a 4-hydroxy-3-(all-trans-polyprenyl)benzoate + H(+) = a 2-(all-trans-polyprenyl)phenol + CO2. It functions in the pathway cofactor biosynthesis; ubiquinone biosynthesis. Its function is as follows. Catalyzes the decarboxylation of 3-octaprenyl-4-hydroxy benzoate to 2-octaprenylphenol, an intermediate step in ubiquinone biosynthesis. This Nitrosomonas eutropha (strain DSM 101675 / C91 / Nm57) protein is 3-octaprenyl-4-hydroxybenzoate carboxy-lyase.